Reading from the N-terminus, the 135-residue chain is Galectin-1 (135 aa).

A2 is subject to N-acetylalanine. Positions 4–135 constitute a Galectin domain; sequence GLVASNLNLK…DFKIKCVAFE (132 aa). 3 positions are modified to N6-acetyllysine: K13, K19, and K29. Position 30 is a phosphoserine (S30). Residues 45 to 49, H53, N62, and 69 to 72 contribute to the a beta-D-galactoside site; these read HFNPR and WGTE. K108 is subject to N6-acetyllysine; alternate. The residue at position 108 (K108) is an N6-succinyllysine; alternate. K128 is subject to N6-acetyllysine.

In terms of assembly, binds LGALS3BP. Interacts with CD2, CD3, CD4, CD6, CD7, CD43, ALCAM and CD45. Interacts with laminin. Interacts with SUSD2. Exists in a reversible and active monomer-homodimer equilibrium, the mononomer/dimer state is regulated by lectin concentration. Interacts with cargo receptor TMED10; the interaction mediates the translocation from the cytoplasm into the ERGIC (endoplasmic reticulum-Golgi intermediate compartment) and thereby secretion.

Its subcellular location is the cytoplasm. It is found in the secreted. The protein localises to the extracellular space. It localises to the extracellular matrix. Lectin that binds beta-galactoside and a wide array of complex carbohydrates. Plays a role in regulating apoptosis, cell proliferation and cell differentiation. Inhibits CD45 protein phosphatase activity and therefore the dephosphorylation of Lyn kinase. Strong inducer of T-cell apoptosis. This Cricetulus griseus (Chinese hamster) protein is Galectin-1 (LGALS1).